The following is a 261-amino-acid chain: tRNA pseudouridine synthase A (261 aa).

Asp-52 serves as the catalytic Nucleophile. Residue Tyr-111 participates in substrate binding.

The protein belongs to the tRNA pseudouridine synthase TruA family. Homodimer.

It catalyses the reaction uridine(38/39/40) in tRNA = pseudouridine(38/39/40) in tRNA. Its function is as follows. Formation of pseudouridine at positions 38, 39 and 40 in the anticodon stem and loop of transfer RNAs. The protein is tRNA pseudouridine synthase A of Jannaschia sp. (strain CCS1).